A 482-amino-acid chain; its full sequence is MFS-type transporter cnsL (482 aa).

A helical transmembrane segment spans residues Leu73–Tyr93. Asn100 is a glycosylation site (N-linked (GlcNAc...) asparagine). Transmembrane regions (helical) follow at residues Trp108–Leu128, Val131–Val151, Ile170–Tyr190, Ile199–Leu219, Leu304–Ala324, Ala333–Pro353, Leu361–Tyr381, Ile392–Thr412, and Val426–Cys446.

It belongs to the major facilitator superfamily. Allantoate permease family.

It localises to the cell membrane. In terms of biological role, MFS-type transporter; part of the gene cluster that mediates the biosynthesis of communesins, a prominent class of indole alkaloids with great potential as pharmaceuticals. With the MFS transporter cnsO, is most likely responsible for cummunesins secretion and thereby may contribute to intrinsic resistance. The protein is MFS-type transporter cnsL of Penicillium expansum (Blue mold rot fungus).